Consider the following 178-residue polypeptide: Interleukin-10 (178 aa).

An N-terminal signal peptide occupies residues 1 to 18 (MHSSALLCCLVFLTGVRA). 2 cysteine pairs are disulfide-bonded: Cys-30–Cys-126 and Cys-80–Cys-132. Asn-134 carries N-linked (GlcNAc...) asparagine glycosylation.

Belongs to the IL-10 family. Homodimer. Interacts with IL10RA and IL10RB.

The protein localises to the secreted. Major immune regulatory cytokine that acts on many cells of the immune system where it has profound anti-inflammatory functions, limiting excessive tissue disruption caused by inflammation. Mechanistically, IL10 binds to its heterotetrameric receptor comprising IL10RA and IL10RB leading to JAK1 and STAT2-mediated phosphorylation of STAT3. In turn, STAT3 translocates to the nucleus where it drives expression of anti-inflammatory mediators. Targets antigen-presenting cells (APCs) such as macrophages and monocytes and inhibits their release of pro-inflammatory cytokines including granulocyte-macrophage colony-stimulating factor /GM-CSF, granulocyte colony-stimulating factor/G-CSF, IL-1 alpha, IL-1 beta, IL-6, IL-8 and TNF-alpha. Also interferes with antigen presentation by reducing the expression of MHC-class II and co-stimulatory molecules, thereby inhibiting their ability to induce T cell activation. In addition, controls the inflammatory response of macrophages by reprogramming essential metabolic pathways including mTOR signaling. The chain is Interleukin-10 (IL10) from Saimiri sciureus (Common squirrel monkey).